A 354-amino-acid polypeptide reads, in one-letter code: Lysophosphatidic acid receptor 3 (354 aa).

Residues 1 to 31 (MNECHYDKRMDFFYNRSNTDTADEWTGTKLV) lie on the Extracellular side of the membrane. A glycan (N-linked (GlcNAc...) asparagine) is linked at Asn15. A helical membrane pass occupies residues 32 to 52 (IVLCVGTFFCLFIFFSNSLVI). Residues 53 to 67 (AAVITNRKFHFPFYY) are Cytoplasmic-facing. A helical transmembrane segment spans residues 68–88 (LLANLAAADFFAGIAYVFLMF). Topologically, residues 89–101 (NTGPVSKTLTVNR) are extracellular. Residues 102-124 (WLLRQGLLDTSLTASLANLLVIA) traverse the membrane as a helical segment. Residues 125–146 (VERHMSIMRMRIHSNLTKKRVT) lie on the Cytoplasmic side of the membrane. A helical membrane pass occupies residues 147 to 167 (LLILLVWAIAIFMGAVPTLGW). Over 168–186 (NCLCNISACSSLAPIYSRS) the chain is Extracellular. Asn172 is a glycosylation site (N-linked (GlcNAc...) asparagine). The helical transmembrane segment at 187–207 (YLIFWTVSNLLAFFIMVVVYV) threads the bilayer. Residues 208–240 (RIYMYVKRKTNVLSPHTSGSISRRRAPMKLMKT) are Cytoplasmic-facing. The chain crosses the membrane as a helical span at residues 241–261 (VMTVLGAFVVCWTPGLVVLLL). Residues 262 to 276 (DGLNCKQCNVQHVKR) are Extracellular-facing. The helical transmembrane segment at 277 to 295 (WFLLLALLNSVMNPIIYSY) threads the bilayer. Topologically, residues 296 to 354 (KDEDMYNTMRKMICCAPHDSNAERHPSRIPSTIHSRSDTGSQYLEDSISQGQVCNKSSS) are cytoplasmic. The S-palmitoyl cysteine moiety is linked to residue Cys309.

The protein belongs to the G-protein coupled receptor 1 family.

It is found in the cell membrane. In terms of biological role, receptor for lysophosphatidic acid (LPA), a mediator of diverse cellular activities. Seems to be coupled to the G(i)/G(o) and G(q) families of heteromeric G proteins. The chain is Lysophosphatidic acid receptor 3 (Lpar3) from Rattus norvegicus (Rat).